We begin with the raw amino-acid sequence, 417 residues long: Glutamyl-tRNA reductase (417 aa).

Residues 49–52, Ser109, 114–116, and Gln120 contribute to the substrate site; these read TCNR and ESQ. Cys50 (nucleophile) is an active-site residue. 189–194 is a binding site for NADP(+); it reads GLGEIG.

The protein belongs to the glutamyl-tRNA reductase family. Homodimer.

It catalyses the reaction (S)-4-amino-5-oxopentanoate + tRNA(Glu) + NADP(+) = L-glutamyl-tRNA(Glu) + NADPH + H(+). It participates in porphyrin-containing compound metabolism; protoporphyrin-IX biosynthesis; 5-aminolevulinate from L-glutamyl-tRNA(Glu): step 1/2. Its function is as follows. Catalyzes the NADPH-dependent reduction of glutamyl-tRNA(Glu) to glutamate 1-semialdehyde (GSA). The polypeptide is Glutamyl-tRNA reductase (Streptococcus sanguinis (strain SK36)).